A 2962-amino-acid polypeptide reads, in one-letter code: Sex determination and dosage compensation protein sdc-2 (2962 aa).

Disordered regions lie at residues 1–28 (MSDE…ADPD) and 1061–1110 (DKRS…QVDP). Residues 15–27 (SFNESDSPDEADP) are compositionally biased toward acidic residues. Coiled coils occupy residues 995 to 1085 (LESA…LADK) and 1140 to 1268 (REER…KRVS). Disordered stretches follow at residues 1535 to 1554 (PASL…GSPV) and 2198 to 2227 (LDSS…NQLD). Acidic residues predominate over residues 2212–2225 (FEDSPSEDENDENQ).

As to quaternary structure, component of the SDC complex, which consists of sdc-1, sdc-2 and sdc-3. Within the complex, interacts with sdc-1 and sdc-3. In terms of tissue distribution, expressed in hermaphrodites (XX), but absent in males (XO) (at protein level).

Its subcellular location is the chromosome. Its function is as follows. Component of the SDC complex that functions in sex determination and in X chromosome dosage compensation specifically in hermaphrodite (XX) animals. Required for the recruitment of the condensin I-like dosage compensation complex to the male sex-determining autosomal gene her-1, thereby contributing to its repression and initiating hermaphrodite sexual development. Plays a central role in X-chromosome recognition and in the recruitment and assembly of the dosage compensation complex and the dosage compensation protein dpy-21 onto the X chromosomes in hermaphrodites, which leads to a reduction of X-linked gene transcription and an equalization of X-linked gene expression between the sexes. May confer protection against toxicity induced by heavy metals such as arsenite. The sequence is that of Sex determination and dosage compensation protein sdc-2 from Caenorhabditis elegans.